Consider the following 415-residue polypeptide: MRIAVIGGGSSYTPELVKGLLDISEDVRIDEVIFYDIDEEKQKIVVDFVKRLVKDRFKVLISDTFEGAVVDAKYVIFQFRPGGLKGRENDEGIPLKYGLIGQETTGVGGFSAALRAFPIVEEYVDTVRKTSNATIVNFTNPSGHITEFVRNYLEYEKFIGLCNVPINFIREIAEMFSARLEDVFLKYYGLNHLSFIEKVFVKGEDVTEKVFENLKLKLSNIPDEDFPTWFYDSVRLIVNPYLRYYLMEKKMFKKISTHELRAREVMKIEKELFEKYRTAVEIPEELTKRGGSMYSTAAAHLIRDLETDEGKIHIVNTRNNGSIENLPDDYVLEIPCYVRSGRVHTLSQGKGDHFALSFIHAVKMYERLTIEAYLKRSKKLALKALLSHPLGPDVEDAKDLLEEILEANREYVKLG.

1–64 (MRIAVIGGGS…DRFKVLISDT (64 aa)) lines the NAD(+) pocket. 2 residues coordinate substrate: Arg-87 and Asn-140. Residue Cys-162 participates in Mn(2+) binding. Position 163 (Asn-163) interacts with substrate. His-192 contacts Mn(2+). Tyr-241 serves as the catalytic Proton acceptor. Arg-261 is a binding site for substrate.

Belongs to the glycosyl hydrolase 4 family. As to quaternary structure, homodimer or homotetramer. Exists in a homodimer/homotetramer equilibrium state in solution. Requires NAD(+) as cofactor. Mn(2+) is required as a cofactor.

It carries out the reaction 6-phospho-beta-D-glucosyl-(1-&gt;4)-D-glucose + H2O = D-glucose 6-phosphate + D-glucose. Its function is as follows. Hydrolyzes cellobiose 6'-phosphate into glucose 6-phosphate (Glc6P) and glucose. The sequence is that of 6-phospho-beta-glucosidase BglT (bglT) from Thermotoga maritima (strain ATCC 43589 / DSM 3109 / JCM 10099 / NBRC 100826 / MSB8).